The following is a 346-amino-acid chain: Zinc-type alcohol dehydrogenase-like protein C1773.06c (346 aa).

It belongs to the zinc-containing alcohol dehydrogenase family. Quinone oxidoreductase subfamily.

The protein resides in the cytoplasm. The polypeptide is Zinc-type alcohol dehydrogenase-like protein C1773.06c (Schizosaccharomyces pombe (strain 972 / ATCC 24843) (Fission yeast)).